The following is a 264-amino-acid chain: S-adenosylmethionine decarboxylase proenzyme (264 aa).

The active-site Schiff-base intermediate with substrate; via pyruvic acid is Ser113. Ser113 is modified (pyruvic acid (Ser); by autocatalysis). The Proton acceptor; for processing activity role is filled by His118. Cys141 serves as the catalytic Proton donor; for catalytic activity.

It belongs to the prokaryotic AdoMetDC family. Type 2 subfamily. In terms of assembly, heterooctamer of four alpha and four beta chains arranged as a tetramer of alpha/beta heterodimers. The cofactor is pyruvate. In terms of processing, is synthesized initially as an inactive proenzyme. Formation of the active enzyme involves a self-maturation process in which the active site pyruvoyl group is generated from an internal serine residue via an autocatalytic post-translational modification. Two non-identical subunits are generated from the proenzyme in this reaction, and the pyruvate is formed at the N-terminus of the alpha chain, which is derived from the carboxyl end of the proenzyme. The post-translation cleavage follows an unusual pathway, termed non-hydrolytic serinolysis, in which the side chain hydroxyl group of the serine supplies its oxygen atom to form the C-terminus of the beta chain, while the remainder of the serine residue undergoes an oxidative deamination to produce ammonia and the pyruvoyl group blocking the N-terminus of the alpha chain.

The enzyme catalyses S-adenosyl-L-methionine + H(+) = S-adenosyl 3-(methylsulfanyl)propylamine + CO2. The protein operates within amine and polyamine biosynthesis; S-adenosylmethioninamine biosynthesis; S-adenosylmethioninamine from S-adenosyl-L-methionine: step 1/1. Catalyzes the decarboxylation of S-adenosylmethionine to S-adenosylmethioninamine (dcAdoMet), the propylamine donor required for the synthesis of the polyamines spermine and spermidine from the diamine putrescine. In Xanthomonas oryzae pv. oryzae (strain MAFF 311018), this protein is S-adenosylmethionine decarboxylase proenzyme.